The chain runs to 168 residues: Transcription antitermination protein NusB (168 aa).

This sequence belongs to the NusB family.

Its function is as follows. Involved in transcription antitermination. Required for transcription of ribosomal RNA (rRNA) genes. Binds specifically to the boxA antiterminator sequence of the ribosomal RNA (rrn) operons. The polypeptide is Transcription antitermination protein NusB (Chlamydia trachomatis serovar A (strain ATCC VR-571B / DSM 19440 / HAR-13)).